The chain runs to 66 residues: Large ribosomal subunit protein bL31 (66 aa).

Zn(2+)-binding residues include Cys-16, Cys-18, Cys-36, and Cys-39.

This sequence belongs to the bacterial ribosomal protein bL31 family. Type A subfamily. In terms of assembly, part of the 50S ribosomal subunit. It depends on Zn(2+) as a cofactor.

Its function is as follows. Binds the 23S rRNA. The polypeptide is Large ribosomal subunit protein bL31 (Leptospira biflexa serovar Patoc (strain Patoc 1 / Ames)).